A 902-amino-acid polypeptide reads, in one-letter code: Zinc finger CCCH-type antiviral protein 1 (902 aa).

Ala-2 bears the N-acetylalanine mark. The N-terminal domain stretch occupies residues 2–254; the sequence is ADPEVCCFIT…ARSKSRDRFF (253 aa). A Nuclear localization signal motif is present at residues 69–76; it reads RARVCRRK. 4 consecutive C3H1-type zinc fingers follow at residues 73 to 86, 88 to 110, 150 to 172, and 169 to 193; these read CRRK…DNLH, CKLN…KYSH, CKSY…SRLH, and SRLH…SHNL. The tract at residues 221–251 is disordered; it reads SKHMQKNPPGPRAPSSHRRNMAYRARSKSRD. Residues 224-254 form a binding to EXOSC5 region; sequence MQKNPPGPRAPSSHRRNMAYRARSKSRDRFF. Basic residues predominate over residues 235–247; that stretch reads SSHRRNMAYRARS. Ser-257, Ser-263, Ser-267, and Ser-271 each carry phosphoserine; by GSK3-beta. A compositionally biased stretch (polar residues) spans 265-278; sequence SASAERSCTPSPDQ. Disordered regions lie at residues 265–287 and 299–373; these read SASA…SLED and YLGS…GARR. Position 273 is a phosphothreonine (Thr-273). Phosphoserine is present on residues Ser-275 and Ser-284. Residues 285–292 carry the Nuclear export signal motif; that stretch reads LEDAPVDD. Phosphoserine is present on residues Ser-302, Ser-327, Ser-335, Ser-355, Ser-378, and Ser-387. 2 stretches are compositionally biased toward polar residues: residues 310–336 and 344–369; these read SGSS…NGSQ and PGST…TNDQ. Phosphothreonine is present on Thr-393. Ser-407, Ser-469, Ser-492, and Ser-494 each carry phosphoserine. Positions 445–481 are disordered; the sequence is LNYKSTSSGHREISSPRIQDAGPASRDVQATGRIADD. Thr-554 is modified (phosphothreonine). Tyr-572 and Ser-590 each carry phosphoserine. A WWE domain is found at 594–681; it reads SVTKPANSVF…ASKTQKDVIR (88 aa). Residues 716 to 902 form the PARP catalytic domain; it reads PQEDFCFLSS…YTEDKACVIS (187 aa).

Belongs to the ARTD/PARP family. Homodimer or homooligomer. Homooligomerization is essential for its antiviral activity. Interacts with EXOSC5. Interacts (via N-terminal domain) with DDX17 in an RNA-independent manner. Interacts with EXOSC3, EXOSC7, DCP2 and DCP1A. Interacts with PARN in an RNA-independent manner. Interacts with XRN1 in an RNA-dependent manner. Isoform 2 interacts (via zinc-fingers) with RIGI in an RNA-dependent manner. Interacts (via N-terminal domain) with DHX30 (via N-terminus) in an RNA-independent manner. Phosphorylation at Ser-275 is essential for sequential phosphorylation of Ser-271, Ser-267, Ser-263 and Ser-257 by GSK3-beta. Phosphorylation by GSK3-beta enhances its antiviral activity.

It is found in the cytoplasm. It localises to the nucleus. In terms of biological role, antiviral protein which inhibits the replication of viruses by recruiting the cellular RNA degradation machineries to degrade the viral mRNAs. Binds to a ZAP-responsive element (ZRE) present in the target viral mRNA, recruits cellular poly(A)-specific ribonuclease PARN to remove the poly(A) tail, and the 3'-5' exoribonuclease complex exosome to degrade the RNA body from the 3'-end. It also recruits the decapping complex DCP1-DCP2 through RNA helicase p72 (DDX17) to remove the cap structure of the viral mRNA to initiate its degradation from the 5'-end. Its target viruses belong to families which include retroviridae: human immunodeficiency virus type 1 (HIV-1), moloney and murine leukemia virus (MoMLV) and xenotropic MuLV-related virus (XMRV), filoviridae: ebola virus (EBOV) and marburg virus (MARV), togaviridae: sindbis virus (SINV) and Ross river virus (RRV). Specifically targets the multiply spliced but not unspliced or singly spliced HIV-1 mRNAs for degradation. Isoform 1 is a more potent viral inhibitor than isoform 2. Isoform 2 acts as a positive regulator of RIGI signaling resulting in activation of the downstream effector IRF3 leading to the expression of type I IFNs and IFN stimulated genes (ISGs). This Homo sapiens (Human) protein is Zinc finger CCCH-type antiviral protein 1.